Consider the following 944-residue polypeptide: Probable UDP-N-acetylglucosamine--peptide N-acetylglucosaminyltransferase SPINDLY (944 aa).

TPR repeat units lie at residues 34-67 (GTDA…DGAN), 68-101 (VEAL…DPKN), 102-135 (ACAL…DPSY), 143-176 (AIVL…DSHY), 177-210 (APAY…RPLY), 211-244 (AEAY…SPNF), 252-285 (AIAL…NWHY), 286-319 (ADAM…NPRC), 320-353 (AEAC…KPNF), 355-387 (QSLN…NPTY), and 388-421 (AEAY…DPDS). The segment at 422–944 (RNAGQNRLLA…RCEANGHSSR (523 aa)) is catalytic region. The tract at residues 873 to 944 (NATAEEDNQS…RCEANGHSSR (72 aa)) is disordered. The span at 897–911 (PQPQIMVNGVTSPEG) shows a compositional bias: polar residues.

Belongs to the glycosyltransferase 41 family. O-GlcNAc transferase subfamily. In terms of tissue distribution, expressed in all parts of plants, including immature leaf blade, leaf sheath, mature leaf blade, roots, germinating embryos and aleurone layers.

Its subcellular location is the nucleus. The enzyme catalyses L-seryl-[protein] + UDP-N-acetyl-alpha-D-glucosamine = 3-O-(N-acetyl-beta-D-glucosaminyl)-L-seryl-[protein] + UDP + H(+). It carries out the reaction L-threonyl-[protein] + UDP-N-acetyl-alpha-D-glucosamine = 3-O-(N-acetyl-beta-D-glucosaminyl)-L-threonyl-[protein] + UDP + H(+). Its pathway is protein modification; protein glycosylation. Functionally, probable O-linked N-acetylglucosamine transferase (OGT) involved in various processes such as gibberellin (GA) signaling pathway. OGTs catalyze the addition of nucleotide-activated sugars directly onto the polypeptide through O-glycosidic linkage with the hydroxyl of serine or threonine. Probably acts by adding O-linked sugars to yet unknown proteins. This chain is Probable UDP-N-acetylglucosamine--peptide N-acetylglucosaminyltransferase SPINDLY (SPY), found in Hordeum vulgare (Barley).